Consider the following 178-residue polypeptide: Bifunctional protein PyrR (178 aa).

Substrate-binding positions include 42 to 43 (TR), R83, 103 to 111 (DDVIYKGRT), R136, and V160. The PRPP-binding motif lies at 99 to 111 (VVLVDDVIYKGRT).

Belongs to the purine/pyrimidine phosphoribosyltransferase family. PyrR subfamily.

The enzyme catalyses UMP + diphosphate = 5-phospho-alpha-D-ribose 1-diphosphate + uracil. In terms of biological role, regulates the transcription of the pyrimidine nucleotide (pyr) operon in response to exogenous pyrimidines. Its function is as follows. Also displays a weak uracil phosphoribosyltransferase activity which is not physiologically significant. The sequence is that of Bifunctional protein PyrR from Synechocystis sp. (strain ATCC 27184 / PCC 6803 / Kazusa).